A 204-amino-acid chain; its full sequence is MTVRTDQLIAAPVARLIEEFAKLPGIGPKTASRLTFYLLRAEPKQALALAQAILDVKEQVGYCRRCFNITVGELCAICLDPSRDQTKICVVEEPLDVLAIERTGAYRGLYHVLHGHIAPLEGIYREDLKIEELLARVRSEPVQEVILATNPNTEGEATAFLLLRDLAPLGVRVTRPARGLPTGGDLEWADPETLGSAFEGRREL.

The C4-type zinc-finger motif lies at 63-78 (CRRCFNITVGELCAIC). The 96-residue stretch at 86-181 (TKICVVEEPL…RVTRPARGLP (96 aa)) folds into the Toprim domain.

The protein belongs to the RecR family.

In terms of biological role, may play a role in DNA repair. It seems to be involved in an RecBC-independent recombinational process of DNA repair. It may act with RecF and RecO. This chain is Recombination protein RecR, found in Chloroflexus aurantiacus (strain ATCC 29366 / DSM 635 / J-10-fl).